Here is a 152-residue protein sequence, read N- to C-terminus: Putative rho GDP-dissociation inhibitor 2 (152 aa).

It belongs to the Rho GDI family.

The protein localises to the cytoplasm. Regulates the GDP/GTP exchange reaction of the Rho proteins by inhibiting the dissociation of GDP from them, and the subsequent binding of GTP to them. The polypeptide is Putative rho GDP-dissociation inhibitor 2 (rdiB) (Dictyostelium discoideum (Social amoeba)).